A 264-amino-acid chain; its full sequence is Thymidylate synthase (264 aa).

DUMP is bound at residue Arg21. His51 is a binding site for (6R)-5,10-methylene-5,6,7,8-tetrahydrofolate. A dUMP-binding site is contributed by 126-127 (RR). Cys146 serves as the catalytic Nucleophile. DUMP-binding positions include 166–169 (RSAD), Asn177, and 207–209 (HLY). Asp169 is a (6R)-5,10-methylene-5,6,7,8-tetrahydrofolate binding site. Ser263 serves as a coordination point for (6R)-5,10-methylene-5,6,7,8-tetrahydrofolate.

This sequence belongs to the thymidylate synthase family. Bacterial-type ThyA subfamily. In terms of assembly, homodimer.

The protein localises to the cytoplasm. The catalysed reaction is dUMP + (6R)-5,10-methylene-5,6,7,8-tetrahydrofolate = 7,8-dihydrofolate + dTMP. The protein operates within pyrimidine metabolism; dTTP biosynthesis. Functionally, catalyzes the reductive methylation of 2'-deoxyuridine-5'-monophosphate (dUMP) to 2'-deoxythymidine-5'-monophosphate (dTMP) while utilizing 5,10-methylenetetrahydrofolate (mTHF) as the methyl donor and reductant in the reaction, yielding dihydrofolate (DHF) as a by-product. This enzymatic reaction provides an intracellular de novo source of dTMP, an essential precursor for DNA biosynthesis. The polypeptide is Thymidylate synthase (Nitrosococcus oceani (strain ATCC 19707 / BCRC 17464 / JCM 30415 / NCIMB 11848 / C-107)).